The sequence spans 217 residues: Large ribosomal subunit protein uL4 (217 aa).

The interval arginine 42 to glutamine 100 is disordered.

This sequence belongs to the universal ribosomal protein uL4 family. Part of the 50S ribosomal subunit.

Its function is as follows. One of the primary rRNA binding proteins, this protein initially binds near the 5'-end of the 23S rRNA. It is important during the early stages of 50S assembly. It makes multiple contacts with different domains of the 23S rRNA in the assembled 50S subunit and ribosome. Forms part of the polypeptide exit tunnel. In Mycobacterium avium (strain 104), this protein is Large ribosomal subunit protein uL4.